A 393-amino-acid polypeptide reads, in one-letter code: Rubredoxin-NAD(+) reductase (393 aa).

Residues 9 to 12 (SGMA), 33 to 34 (CA), Lys42, Val80, Glu162, Asp282, Val294, and Lys325 each bind FAD.

The protein belongs to the FAD-dependent oxidoreductase family. As to quaternary structure, homodimer. It depends on FAD as a cofactor.

The protein resides in the cytoplasm. It catalyses the reaction 2 reduced [rubredoxin] + NAD(+) + H(+) = 2 oxidized [rubredoxin] + NADH. It participates in hydrocarbon metabolism; alkane degradation. In terms of biological role, involved in the hydrocarbon hydroxylating system, which transfers electrons from NADH to rubredoxin reductase and then through rubredoxin to alkane 1 monooxygenase. In Acinetobacter baylyi (strain ATCC 33305 / BD413 / ADP1), this protein is Rubredoxin-NAD(+) reductase (rubB).